The primary structure comprises 442 residues: 23S rRNA (uracil(1939)-C(5))-methyltransferase RlmD (442 aa).

Residues 12–70 (SKQLSAKVTLEVTKLDHLGAGMAQHQGKIVFIPGALPNEKVTVQLTEQKKRHARAKLLK) enclose the TRAM domain. Positions 83, 89, 92, and 171 each coordinate [4Fe-4S] cluster. Q276, F305, N310, E326, D353, and D373 together coordinate S-adenosyl-L-methionine. The active-site Nucleophile is the C399.

Belongs to the class I-like SAM-binding methyltransferase superfamily. RNA M5U methyltransferase family. RlmD subfamily.

It catalyses the reaction uridine(1939) in 23S rRNA + S-adenosyl-L-methionine = 5-methyluridine(1939) in 23S rRNA + S-adenosyl-L-homocysteine + H(+). Catalyzes the formation of 5-methyl-uridine at position 1939 (m5U1939) in 23S rRNA. This is 23S rRNA (uracil(1939)-C(5))-methyltransferase RlmD from Shewanella sediminis (strain HAW-EB3).